The following is a 121-amino-acid chain: Putative SNURF-like protein (121 aa).

It belongs to the SNURF family.

The chain is Putative SNURF-like protein (SNURFL) from Homo sapiens (Human).